We begin with the raw amino-acid sequence, 193 residues long: MNALIDNPEALASGYLAMAQVFSYPDAGAWSRLTERGLVDPALTHETLEAEYLAAFEMGGGKATVSLYEGQNRPDLGRDGILQELLRFYEFFDAQLSEDDREYPDHLVTELEFLAWLCLQEHAAVRDGRDAEPFRRAARDFLDRHLAAWLPEFRRRLEATDSAYAQYGPALGELVEAHRSRLGEQAPQLGELQ.

The protein belongs to the type II DMSO reductase enzyme chaperone family.

The protein resides in the cytoplasm. May function as a system-specific chaperone protein essential for the assembly of an active selenate reductase SerABC. This is Selenate reductase assembly chaperone protein from Thauera selenatis.